The following is a 64-amino-acid chain: Conotoxin Am1.1 (64 aa).

The first 22 residues, 1 to 22, serve as a signal peptide directing secretion; that stretch reads MSCLPVFVILLLLTASGPSVDA. Residues 23-49 constitute a propeptide that is removed on maturation; the sequence is RLKTKDDVPLSSFRDNAKSTLRRLQDK. Pro-60 bears the 4-hydroxyproline; partial; in major form mark.

This sequence belongs to the conotoxin T superfamily. Contains 2 disulfide bonds. Expressed by the venom duct.

Its subcellular location is the secreted. Its function is as follows. Probable toxin that inhibits ion channels. The protein is Conotoxin Am1.1 of Conus amadis (Amadis cone).